A 314-amino-acid polypeptide reads, in one-letter code: O-antigen chain rhamnosyltransferase RfbN (314 aa).

Belongs to the glycosyltransferase 2 family.

It carries out the reaction alpha-D-galactosyl-di-trans,octa-cis-undecaprenyl diphosphate + dTDP-beta-L-rhamnose = alpha-L-rhamnosyl-(1-&gt;3)-alpha-D-galactosyl-1-diphospho-di-trans,octa-cis-undecaprenol + dTDP + H(+). The protein operates within bacterial outer membrane biogenesis; LPS O-antigen biosynthesis. Its function is as follows. Rhamnosyltransferase involved in the biosynthesis of the repeat unit of the lipopolysaccharide (LPS) O-antigen region. Catalyzes the addition of a rhamnose to the galactosyl-undecaprenyl diphosphate intermediate. The sequence is that of O-antigen chain rhamnosyltransferase RfbN from Salmonella typhimurium (strain LT2 / SGSC1412 / ATCC 700720).